The following is a 109-amino-acid chain: Cell division protein ZapA (109 aa).

A coiled-coil region spans residues 22-99 (EQQDALNMAA…IEQALLEQGR (78 aa)).

It belongs to the ZapA family. Type 1 subfamily. Homodimer. Interacts with FtsZ.

It localises to the cytoplasm. Activator of cell division through the inhibition of FtsZ GTPase activity, therefore promoting FtsZ assembly into bundles of protofilaments necessary for the formation of the division Z ring. It is recruited early at mid-cell but it is not essential for cell division. The polypeptide is Cell division protein ZapA (Yersinia pseudotuberculosis serotype O:1b (strain IP 31758)).